A 738-amino-acid chain; its full sequence is DNA topoisomerase 4 subunit A (738 aa).

Positions 32–496 constitute a Topo IIA-type catalytic domain; sequence LPDVRDGLKP…SFEEVTLTNQ (465 aa). The O-(5'-phospho-DNA)-tyrosine intermediate role is filled by tyrosine 120.

The protein belongs to the type II topoisomerase GyrA/ParC subunit family. ParC type 1 subfamily. Heterotetramer composed of ParC and ParE.

It localises to the cell membrane. The enzyme catalyses ATP-dependent breakage, passage and rejoining of double-stranded DNA.. Its function is as follows. Topoisomerase IV is essential for chromosome segregation. It relaxes supercoiled DNA. Performs the decatenation events required during the replication of a circular DNA molecule. The sequence is that of DNA topoisomerase 4 subunit A from Rickettsia conorii (strain ATCC VR-613 / Malish 7).